We begin with the raw amino-acid sequence, 333 residues long: MVQEKLRFSTRTLQWKCVESRIESKRLYYGRFILSPLMKGQADTIGIAIRRILLGEIEGTCITRVKSEKIPHEYSTIIGIEESVHEIFMNLKEIVLKSNMYGTQDASISFKGPGYITAQDIILPPSVEIVDNRQHIANVTEPVNLCIELKIERNRGYRIKTLKNFQDGSYDIDARFMPVRNVNYSIHSYVNGNEKQEILFLEIWTNGSLTPKEALYEASQNLIDLFIPFLHAEEENFNLEKKKHKVTLPLFTFHDILVKDKLRKNKKEIALKSIFIDQLELPPRIYNCLKRSNIHTLLELLNNSQEXLLKIEHFRVEDGKSILDILKIQKYFT.

Residues Met1–Glu233 are alpha N-terminal domain (alpha-NTD). Residues Lys266–Thr333 form an alpha C-terminal domain (alpha-CTD) region.

The protein belongs to the RNA polymerase alpha chain family. As to quaternary structure, in plastids the minimal PEP RNA polymerase catalytic core is composed of four subunits: alpha, beta, beta', and beta''. When a (nuclear-encoded) sigma factor is associated with the core the holoenzyme is formed, which can initiate transcription.

The protein resides in the plastid. It localises to the chloroplast. The catalysed reaction is RNA(n) + a ribonucleoside 5'-triphosphate = RNA(n+1) + diphosphate. Its function is as follows. DNA-dependent RNA polymerase catalyzes the transcription of DNA into RNA using the four ribonucleoside triphosphates as substrates. The chain is DNA-directed RNA polymerase subunit alpha from Phaseolus angularis (Azuki bean).